The sequence spans 296 residues: Small ribosomal subunit protein uS2 (296 aa).

Positions 252–296 (TSSKTVSKLKQSKKLSKTQNIDEETNTEFDQALGGACENNNSDNT) are disordered.

The protein belongs to the universal ribosomal protein uS2 family.

In Rickettsia prowazekii (strain Madrid E), this protein is Small ribosomal subunit protein uS2 (rpsB).